The chain runs to 469 residues: UDP-N-acetylmuramate--L-alanine ligase (469 aa).

113 to 119 (GTHGKTT) contacts ATP.

This sequence belongs to the MurCDEF family.

It localises to the cytoplasm. It catalyses the reaction UDP-N-acetyl-alpha-D-muramate + L-alanine + ATP = UDP-N-acetyl-alpha-D-muramoyl-L-alanine + ADP + phosphate + H(+). It functions in the pathway cell wall biogenesis; peptidoglycan biosynthesis. Functionally, cell wall formation. This is UDP-N-acetylmuramate--L-alanine ligase from Neisseria gonorrhoeae (strain ATCC 700825 / FA 1090).